The following is a 329-amino-acid chain: Phosphate acyltransferase (329 aa).

It belongs to the PlsX family. In terms of assembly, homodimer. Probably interacts with PlsY.

Its subcellular location is the cytoplasm. The catalysed reaction is a fatty acyl-[ACP] + phosphate = an acyl phosphate + holo-[ACP]. Its pathway is lipid metabolism; phospholipid metabolism. Its function is as follows. Catalyzes the reversible formation of acyl-phosphate (acyl-PO(4)) from acyl-[acyl-carrier-protein] (acyl-ACP). This enzyme utilizes acyl-ACP as fatty acyl donor, but not acyl-CoA. The chain is Phosphate acyltransferase from Campylobacter concisus (strain 13826).